Reading from the N-terminus, the 209-residue chain is Fibroblast growth factor 21 (209 aa).

Positions M1–A28 are cleaved as a signal peptide. Residues P143–S209 are disordered. A compositionally biased stretch (pro residues) spans P168 to P186.

It belongs to the heparin-binding growth factors family. As to quaternary structure, interacts (via C-terminus) with KLB; this interaction is direct. Interacts with FGFR4.

Its subcellular location is the secreted. Stimulates glucose uptake in differentiated adipocytes via the induction of glucose transporter SLC2A1/GLUT1 expression (but not SLC2A4/GLUT4 expression). Activity requires the presence of KLB. Regulates systemic glucose homeostasis and insulin sensitivity. The protein is Fibroblast growth factor 21 (FGF21) of Homo sapiens (Human).